The sequence spans 998 residues: DNA damage-induced apoptosis suppressor protein (998 aa).

The disordered stretch occupies residues 815 to 834; it reads DKQQASPSCPKNIKTPSQKI. Residues 817–834 are compositionally biased toward polar residues; it reads QQASPSCPKNIKTPSQKI.

In terms of tissue distribution, highly expressed in colorectal and lung cancer tissues.

The protein localises to the cytoplasm. The protein resides in the nucleus. In terms of biological role, may be an anti-apoptotic protein involved in DNA repair or cell survival. This chain is DNA damage-induced apoptosis suppressor protein (DDIAS), found in Homo sapiens (Human).